The sequence spans 792 residues: Alpha-1,6-mannosylglycoprotein 6-beta-N-acetylglucosaminyltransferase B (792 aa).

At 1–24 the chain is on the cytoplasmic side; that stretch reads MITVNPDGKIMVRRCLVTLRPFRL. A helical; Signal-anchor for type II membrane protein transmembrane segment spans residues 25–45; that stretch reads FVLGIGFFTLCFLMTSLGGQF. At 46–792 the chain is on the lumenal side; it reads SARRLGDSPF…GQVALCQGCL (747 aa). N-linked (GlcNAc...) asparagine glycosylation is present at Asn127. Intrachain disulfides connect Cys157-Cys195, Cys168-Cys208, Cys184-Cys353, Cys387-Cys644, Cys700-Cys775, Cys704-Cys777, Cys711-Cys764, Cys732-Cys753, and Cys788-Cys791.

It belongs to the glycosyltransferase 18 family. Mn(2+) serves as cofactor. In terms of tissue distribution, predominantly expressed in brain. Expressed in all areas of the adult and fetal brain. Also expressed at much lower levels in testis, spleen and thymus.

The protein resides in the golgi apparatus membrane. It catalyses the reaction N(4)-{beta-D-GlcNAc-(1-&gt;2)-[beta-D-GlcNAc-(1-&gt;4)]-alpha-D-Man-(1-&gt;3)-[beta-D-GlcNAc-(1-&gt;2)-alpha-D-Man-(1-&gt;6)]-beta-D-Man-(1-&gt;4)-beta-D-GlcNAc-(1-&gt;4)-beta-D-GlcNAc}-L-asparaginyl-[protein] + UDP-N-acetyl-alpha-D-glucosamine = N(4)-{beta-D-GlcNAc-(1-&gt;2)-[beta-D-GlcNAc-(1-&gt;4)]-alpha-D-Man-(1-&gt;3)-[beta-D-GlcNAc-(1-&gt;2)-[beta-D-GlcNAc-(1-&gt;6)]-alpha-D-Man-(1-&gt;6)]-beta-D-Man-(1-&gt;4)-beta-D-GlcNAc-(1-&gt;4)-beta-D-GlcNAc}-L-asparaginyl-[protein] + UDP + H(+). It carries out the reaction 3-O-[N-acetyl-beta-D-glucosaminyl-(1-&gt;2)-alpha-D-mannosyl]-L-seryl-[protein] + UDP-N-acetyl-alpha-D-glucosamine = O(3)-{N-acetyl-beta-D-glucosaminyl-(1-&gt;2)-[N-acetyl-beta-D-glucosaminyl-(1-&gt;6)]-alpha-D-mannosyl}-L-seryl-[protein] + UDP + H(+). The enzyme catalyses 3-O-[N-acetyl-beta-D-glucosaminyl-(1-&gt;2)-alpha-D-mannosyl]-L-threonyl-[protein] + UDP-N-acetyl-alpha-D-glucosamine = O(3)-{N-acetyl-beta-D-glucosaminyl-(1-&gt;2)-[N-acetyl-beta-D-glucosaminyl-(1-&gt;6)]-alpha-D-mannosyl}-L-threonyl-[protein] + UDP + H(+). The protein operates within protein modification; protein glycosylation. Glycosyltransferase that acts on alpha-linked mannose of N-glycans and O-mannosyl glycans. Catalyzes the transfer of N-acetylglucosamine (GlcNAc) to the beta 1-6 linkage of the mannose residue of GlcNAc-beta1,2-Man-alpha on both the alpha1,3- and alpha1,6-linked mannose arms in the core structure of N-glycan. Also acts on the GlcNAc-beta1,2-Man-alpha1-Ser/Thr moiety, forming a 2,6-branched structure in brain O-mannosyl glycan. Plays an active role in modulating integrin and laminin-dependent adhesion and migration of neuronal cells via its activity in the O-mannosyl glycan pathway. This Homo sapiens (Human) protein is Alpha-1,6-mannosylglycoprotein 6-beta-N-acetylglucosaminyltransferase B (MGAT5B).